A 411-amino-acid polypeptide reads, in one-letter code: UPF0761 membrane protein PA0951 (411 aa).

The next 6 helical transmembrane spans lie at 36–56 (LFAVVPMMTVMFSMLSLIPAF), 92–112 (HLTWVGVVFLAVTAFTMLVTI), 132–152 (FLLYWAILSLGPLLLGAGFAV), 174–194 (LLGLMPLAFSVAAFTLLYSAV), 207–229 (GGVFTAVLFEAAKTLFGLYVSLF), and 244–264 (IFLLWIYLSWMIVLFGAVLVC).

This sequence belongs to the UPF0761 family.

Its subcellular location is the cell inner membrane. In Pseudomonas aeruginosa (strain ATCC 15692 / DSM 22644 / CIP 104116 / JCM 14847 / LMG 12228 / 1C / PRS 101 / PAO1), this protein is UPF0761 membrane protein PA0951.